Reading from the N-terminus, the 135-residue chain is Putative pre-16S rRNA nuclease (135 aa).

The protein belongs to the YqgF nuclease family.

The protein resides in the cytoplasm. Could be a nuclease involved in processing of the 5'-end of pre-16S rRNA. The polypeptide is Putative pre-16S rRNA nuclease (Clostridium acetobutylicum (strain ATCC 824 / DSM 792 / JCM 1419 / IAM 19013 / LMG 5710 / NBRC 13948 / NRRL B-527 / VKM B-1787 / 2291 / W)).